The chain runs to 152 residues: Interleukin-3 (152 aa).

The signal sequence occupies residues 1–19; that stretch reads MSCLPVLLLLQLLVSPGLQ. Residues N34 and N89 are each glycosylated (N-linked (GlcNAc...) asparagine). C35 and C103 are disulfide-bonded.

The protein belongs to the IL-3 family. In terms of assembly, monomer. As to expression, activated T-cells, mast cells, natural killer cells.

Its subcellular location is the secreted. Granulocyte/macrophage colony-stimulating factors are cytokines that act in hematopoiesis by controlling the production, differentiation, and function of 2 related white cell populations of the blood, the granulocytes and the monocytes-macrophages. Functionally, this CSF induces granulocytes, macrophages, mast cells, stem cells, erythroid cells, eosinophils and megakaryocytes. In Hylobates lar (Lar gibbon), this protein is Interleukin-3 (IL3).